A 430-amino-acid polypeptide reads, in one-letter code: MLDSNLLRNEPDAVAEKLARRGFKLDVDKLRALEERRKVLQVNTENLQAERNSRSKSIGQAKARGEDIEPLRLEVNKLGEELDAAKAELDTLLAEIRDIALTIPNLPADEVPVGKDENDNVEVSRWGTPREFDFEIRDHVTLGEMHSGLDFAAAVKLTGSRFVVMKGQIARMHRALSQFMLDLHTEQHGYSENYVPYLVNHDTLYGTGQLPKFAGDLFHTRPLEEEADSSNYALIPTAEVPLTNLVRDEIIDEDQLPIKMTAHTPCFRSEAGSYGRDTRGLIRMHQFDKVEMVQIVRPEDSMAALEEMTGHAEKVLQLLGLPYRKIILCTGDMGFGACKTYDLEVWVPAQNTYREISSCSNVWDFQARRMQARCRSKSDKKTRLVHTLNGSGLAVGRTLVAVMENYQQADGRIEVPEVLRPYMNGLEYIG.

L-serine is bound at residue threonine 237–glutamate 239. Arginine 268–glutamate 270 is an ATP binding site. Glutamate 291 provides a ligand contact to L-serine. ATP is bound at residue glutamate 355–serine 358. L-serine is bound at residue serine 391.

The protein belongs to the class-II aminoacyl-tRNA synthetase family. Type-1 seryl-tRNA synthetase subfamily. In terms of assembly, homodimer. The tRNA molecule binds across the dimer.

Its subcellular location is the cytoplasm. It catalyses the reaction tRNA(Ser) + L-serine + ATP = L-seryl-tRNA(Ser) + AMP + diphosphate + H(+). It carries out the reaction tRNA(Sec) + L-serine + ATP = L-seryl-tRNA(Sec) + AMP + diphosphate + H(+). It participates in aminoacyl-tRNA biosynthesis; selenocysteinyl-tRNA(Sec) biosynthesis; L-seryl-tRNA(Sec) from L-serine and tRNA(Sec): step 1/1. In terms of biological role, catalyzes the attachment of serine to tRNA(Ser). Is also able to aminoacylate tRNA(Sec) with serine, to form the misacylated tRNA L-seryl-tRNA(Sec), which will be further converted into selenocysteinyl-tRNA(Sec). This Salmonella paratyphi C (strain RKS4594) protein is Serine--tRNA ligase.